The primary structure comprises 533 residues: Phosphatidylinositol 4-kinase gamma 8 (533 aa).

A PI3K/PI4K catalytic domain is found at 101–397; sequence GAQPLLLPSG…AVSGSDDDDD (297 aa). Positions 107–113 are G-loop; it reads LPSGLGG. Residues 108–114, lysine 129, and 210–213 contribute to the ATP site; these read PSGLGGA and QRFV. The catalytic loop stretch occupies residues 243-251; that stretch reads LNLDRHAGN. An activation loop region spans residues 276–302; sequence PIDHGLCLPECLDDPYFEWLNWPQASV. An ATP-binding site is contributed by aspartate 278.

It belongs to the PI3/PI4-kinase family. Type II PI4K subfamily.

It catalyses the reaction a 1,2-diacyl-sn-glycero-3-phospho-(1D-myo-inositol) + ATP = a 1,2-diacyl-sn-glycero-3-phospho-(1D-myo-inositol 4-phosphate) + ADP + H(+). The phosphorylation of phosphatidylinositol (PI) to PI4P is the first committed step in the generation of phosphatidylinositol 4,5-bisphosphate (PIP2), a precursor of the second messenger inositol 1,4,5-trisphosphate (InsP3). The chain is Phosphatidylinositol 4-kinase gamma 8 (PI4KG8) from Arabidopsis thaliana (Mouse-ear cress).